Reading from the N-terminus, the 231-residue chain is Large ribosomal subunit protein uL1 (231 aa).

Belongs to the universal ribosomal protein uL1 family. Part of the 50S ribosomal subunit.

Its function is as follows. Binds directly to 23S rRNA. The L1 stalk is quite mobile in the ribosome, and is involved in E site tRNA release. In terms of biological role, protein L1 is also a translational repressor protein, it controls the translation of the L11 operon by binding to its mRNA. This chain is Large ribosomal subunit protein uL1, found in Cupriavidus pinatubonensis (strain JMP 134 / LMG 1197) (Cupriavidus necator (strain JMP 134)).